Reading from the N-terminus, the 455-residue chain is Peroxisomal membrane protein PEX3 (455 aa).

Positions 113–125 are enriched in polar residues; that stretch reads TVLSDDFSTSQEG. A disordered region spans residues 113 to 135; sequence TVLSDDFSTSQEGAISEDTNKPP. The chain crosses the membrane as a helical span at residues 155–171; the sequence is FLTLIYCESLLIVFLHL.

The protein belongs to the peroxin-3 family. In terms of assembly, component of the peroxisomal docking complex, composed of at least PEX3, PEX13, PEX14 and PEX17. Component of the peroxisomal translocation complex, composed of at least PEX3, PEX2, PEX10 and PEX12. Interacts with PEX19. Interacts with the pexophagy receptor ATG30.

The protein localises to the peroxisome membrane. In terms of biological role, peroxisomal membrane protein required for peroxisome biosynthesis. Shared component of both the peroxisomal docking complex and the peroxisomal translocation complex. The two types of peroxisomal matrix targeting signals, PTS1 and PTS2, are first recognized in the cytosol by their receptors PEX5 and PEX7, respectively, which then carry the cargo to the peroxisomal membrane. The peroxisomal targeting signal (PTS) receptor-cargo complexes interact with peroxisomal membrane protein (PMP) components of the docking complex. They have then additional downstream interactions with the translocation complex, leading to the transport of fully folded and oligomerized cargo into the peroxisome matrix. PEX3 acts as an anchoring site for PEX19 on the peroxisomal membrane and thus plays a crucial role in the assembly of the peroxisomal translocation complex. Is also essential for the interaction between the two complexes. Finally. PEX3 activates selective autophagy of peroxisomes (pexophagy) via interaction with the pexophagy receptor ATG30. The chain is Peroxisomal membrane protein PEX3 from Komagataella phaffii (strain GS115 / ATCC 20864) (Yeast).